The following is a 166-amino-acid chain: Small ribosomal subunit protein uS5 (166 aa).

In terms of domain architecture, S5 DRBM spans 11-74 (LQEKLIAVNR…EKARRNMINV (64 aa)).

Belongs to the universal ribosomal protein uS5 family. Part of the 30S ribosomal subunit. Contacts proteins S4 and S8.

In terms of biological role, with S4 and S12 plays an important role in translational accuracy. Functionally, located at the back of the 30S subunit body where it stabilizes the conformation of the head with respect to the body. The chain is Small ribosomal subunit protein uS5 from Haemophilus ducreyi (strain 35000HP / ATCC 700724).